A 286-amino-acid polypeptide reads, in one-letter code: Ribosome-inactivating protein momordin I (286 aa).

Positions 1-23 are cleaved as a signal peptide; the sequence is MSRFSVLSFLILAIFLGGSIVKG. Residue Glu183 is part of the active site. Asn250 carries an N-linked (GlcNAc...) asparagine glycan. Positions 270–286 are cleaved as a propeptide — removed in mature form; that stretch reads AEGDNGDVSTTHGFSSY.

It belongs to the ribosome-inactivating protein family. Type 1 RIP subfamily.

The catalysed reaction is Endohydrolysis of the N-glycosidic bond at one specific adenosine on the 28S rRNA.. This Momordica charantia (Bitter gourd) protein is Ribosome-inactivating protein momordin I.